Consider the following 217-residue polypeptide: Protein-L-isoaspartate O-methyltransferase (217 aa).

S64 is an active-site residue.

The protein belongs to the methyltransferase superfamily. L-isoaspartyl/D-aspartyl protein methyltransferase family.

The protein resides in the cytoplasm. The catalysed reaction is [protein]-L-isoaspartate + S-adenosyl-L-methionine = [protein]-L-isoaspartate alpha-methyl ester + S-adenosyl-L-homocysteine. Functionally, catalyzes the methyl esterification of L-isoaspartyl residues in peptides and proteins that result from spontaneous decomposition of normal L-aspartyl and L-asparaginyl residues. It plays a role in the repair and/or degradation of damaged proteins. The sequence is that of Protein-L-isoaspartate O-methyltransferase from Azorhizobium caulinodans (strain ATCC 43989 / DSM 5975 / JCM 20966 / LMG 6465 / NBRC 14845 / NCIMB 13405 / ORS 571).